The primary structure comprises 395 residues: ATP phosphoribosyltransferase regulatory subunit (395 aa).

The protein belongs to the class-II aminoacyl-tRNA synthetase family. HisZ subfamily. In terms of assembly, heteromultimer composed of HisG and HisZ subunits.

It is found in the cytoplasm. Its pathway is amino-acid biosynthesis; L-histidine biosynthesis; L-histidine from 5-phospho-alpha-D-ribose 1-diphosphate: step 1/9. Functionally, required for the first step of histidine biosynthesis. May allow the feedback regulation of ATP phosphoribosyltransferase activity by histidine. The sequence is that of ATP phosphoribosyltransferase regulatory subunit from Ectopseudomonas mendocina (strain ymp) (Pseudomonas mendocina).